We begin with the raw amino-acid sequence, 462 residues long: Ribosomal protein uS12 methylthiotransferase RimO (462 aa).

The 112-residue stretch at 22 to 133 (ASVAFLHLGC…IIEVLQRVRQ (112 aa)) folds into the MTTase N-terminal domain. The [4Fe-4S] cluster site is built by Cys31, Cys67, Cys96, Cys171, Cys175, and Cys178. Residues 157–386 (TTGRFVSYLK…VAIQQPISAA (230 aa)) enclose the Radical SAM core domain. Residues 389–460 (QALIGQTVDV…LYDLTGEINH (72 aa)) form the TRAM domain.

This sequence belongs to the methylthiotransferase family. RimO subfamily. [4Fe-4S] cluster serves as cofactor.

Its subcellular location is the cytoplasm. The catalysed reaction is L-aspartate(89)-[ribosomal protein uS12]-hydrogen + (sulfur carrier)-SH + AH2 + 2 S-adenosyl-L-methionine = 3-methylsulfanyl-L-aspartate(89)-[ribosomal protein uS12]-hydrogen + (sulfur carrier)-H + 5'-deoxyadenosine + L-methionine + A + S-adenosyl-L-homocysteine + 2 H(+). Its function is as follows. Catalyzes the methylthiolation of an aspartic acid residue of ribosomal protein uS12. This chain is Ribosomal protein uS12 methylthiotransferase RimO, found in Prochlorococcus marinus (strain MIT 9211).